The sequence spans 467 residues: Asparagine--tRNA ligase (467 aa).

Belongs to the class-II aminoacyl-tRNA synthetase family. As to quaternary structure, homodimer.

The protein resides in the cytoplasm. The catalysed reaction is tRNA(Asn) + L-asparagine + ATP = L-asparaginyl-tRNA(Asn) + AMP + diphosphate + H(+). This chain is Asparagine--tRNA ligase, found in Baumannia cicadellinicola subsp. Homalodisca coagulata.